A 535-amino-acid chain; its full sequence is Estrogen receptor (535 aa).

The segment at 1–21 is disordered; the sequence is SRMLTDPPRIGSMQSLGSSPT. The modulating stretch occupies residues 1–104; sequence SRMLTDPPRI…VFEMANETRY (104 aa). The segment covering 12–21 has biased composition (polar residues); sequence SMQSLGSSPT. 2 NR C4-type zinc fingers span residues 105-125 and 141-165; these read CAVC…CEGC and CPAT…LRKC. Residues 105–170 constitute a DNA-binding region (nuclear receptor); sequence CAVCSDFASG…RLRKCYEVGM (66 aa). Positions 171 to 236 are hinge; the sequence is VKGGLRKDRG…GGWCGPRITM (66 aa). Residues 187 to 229 form a disordered region; it reads DKRYCGPAGDREKPYGDLEHRTAPPQDGGRNSSSSSLSGGGGW. Over residues 195–208 the composition is skewed to basic and acidic residues; it reads GDREKPYGDLEHRT. Over residues 214-223 the composition is skewed to low complexity; the sequence is GGRNSSSSSL. The 237-residue stretch at 237-473 folds into the NR LBD domain; the sequence is PPEQVLFLLQ…DLLLEMLDGH (237 aa). Residues 478-535 form a disordered region; the sequence is PGKVAQAGEQTEGPSTTTTTSTGSSIGPMRGSQDTHIRSPGSGVLQYGSPSSDQMPIP. Low complexity predominate over residues 492-502; it reads STTTTTSTGSS. Over residues 525 to 535 the composition is skewed to polar residues; it reads GSPSSDQMPIP.

The protein belongs to the nuclear hormone receptor family. NR3 subfamily. In terms of assembly, binds DNA as a homodimer. Can form a heterodimer with ER-beta. In terms of tissue distribution, highest expression in brain and liver.

Its subcellular location is the nucleus. In terms of biological role, the steroid hormones and their receptors are involved in the regulation of eukaryotic gene expression and affect cellular proliferation and differentiation in target tissues. The protein is Estrogen receptor (esr1) of Salmo salar (Atlantic salmon).